A 1159-amino-acid polypeptide reads, in one-letter code: ATP-dependent helicase/deoxyribonuclease subunit B (1159 aa).

Position 8-15 (8-15) interacts with ATP; sequence GRAGSGKT. Residues C784, C1102, C1105, and C1111 each contribute to the [4Fe-4S] cluster site. A disordered region spans residues 1140–1159; that stretch reads VKEDGSQVDGRTEGSDNNEG.

This sequence belongs to the helicase family. AddB/RexB type 1 subfamily. As to quaternary structure, heterodimer of AddA and AddB. Requires Mg(2+) as cofactor. [4Fe-4S] cluster serves as cofactor.

In terms of biological role, the heterodimer acts as both an ATP-dependent DNA helicase and an ATP-dependent, dual-direction single-stranded exonuclease. Recognizes the chi site generating a DNA molecule suitable for the initiation of homologous recombination. The AddB subunit has 5' -&gt; 3' nuclease activity but not helicase activity. This is ATP-dependent helicase/deoxyribonuclease subunit B from Caldanaerobacter subterraneus subsp. tengcongensis (strain DSM 15242 / JCM 11007 / NBRC 100824 / MB4) (Thermoanaerobacter tengcongensis).